A 250-amino-acid polypeptide reads, in one-letter code: 1-(5-phosphoribosyl)-5-[(5-phosphoribosylamino)methylideneamino] imidazole-4-carboxamide isomerase (250 aa).

D8 acts as the Proton acceptor in catalysis. The active-site Proton donor is D129.

Belongs to the HisA/HisF family.

The protein localises to the cytoplasm. It carries out the reaction 1-(5-phospho-beta-D-ribosyl)-5-[(5-phospho-beta-D-ribosylamino)methylideneamino]imidazole-4-carboxamide = 5-[(5-phospho-1-deoxy-D-ribulos-1-ylimino)methylamino]-1-(5-phospho-beta-D-ribosyl)imidazole-4-carboxamide. The protein operates within amino-acid biosynthesis; L-histidine biosynthesis; L-histidine from 5-phospho-alpha-D-ribose 1-diphosphate: step 4/9. This Desulfatibacillum aliphaticivorans protein is 1-(5-phosphoribosyl)-5-[(5-phosphoribosylamino)methylideneamino] imidazole-4-carboxamide isomerase.